The sequence spans 162 residues: UPF0114 protein PST_0950 (162 aa).

Transmembrane regions (helical) follow at residues 15–35 (LLAPIYFGLAFALLALAIKFF), 53–73 (LVLTLLSLIDMALVGGLLVMV), and 136–156 (LMWYVIIHLTFVVSAFAMGYM).

It belongs to the UPF0114 family.

It is found in the cell membrane. This Stutzerimonas stutzeri (strain A1501) (Pseudomonas stutzeri) protein is UPF0114 protein PST_0950.